Consider the following 716-residue polypeptide: MSTTTGPEAAPKPSAKSIYEQRKRYSTVVMADVSQYHVNHLVTFCLGEEDGVHTVEDASRKLAVMDSQGRVWAQEMLLRVSPSQVTLLDPVSKEELESYPLDAIVRCDAVMPRGRSRSLLLLVCQEPERAQPDVHFFQGLLLGAELIREDIQGALQNYRSGRGERRAAALRATQEELRRGASPAAETPPLQRRPSVRLVINTVEPSAVRGRPQVESIPETEEARKPDQARTTSSADPTSPDLGPRGPELAGLQAERDVDILNHVFDDVESFVSRLQKSAEATRVLEHRERGRRTRRRAAGEGLLTLRAKPPTEAEYTDVLQKIKYAFSLLARLRGNIANPSSPELLHFLFGPLQMIVNTSGGPEFAKSVRRPHLTLEAVTLLRDNVTPGENELWTSLGDSWTCPGVELPPEEGSPYSPEFYNGWEPPATDPQGRPWEDPVEKQLQHEKRRRQQSAPQVAVNGQQDPELETESQLEEKARKWVLCNYDFQARNGSELSVKHRDVLEVLDDRRKWWKVRDHQGQEGYVPYNILTPHPGPQVHRSQSPARHLETSTPPPPPAPAPAPTQVRPQWDSCDSLNSLDPSEKEKFSQMLCVNEELQSRLAQGRSGPSRVTPGPRAQEPQLSPRSEASVVRAWLQTKGFSSGTVEALGVLTGAQLFSLQKEELRAVCPEEGARVYSQVTVQRALLEDREKVSELEAVMEKQKKKVEGETKTEVI.

Residues 35–164 (QYHVNHLVTF…LQNYRSGRGE (130 aa)) enclose the PTB domain. Disordered regions lie at residues 175-194 (EELR…QRRP), 203-249 (VEPS…GPEL), 404-472 (PGVE…ETES), 528-582 (YNIL…SLDP), and 600-628 (SRLA…PRSE). The residue at position 182 (Ser-182) is a Phosphoserine. A Phosphothreonine modification is found at Thr-187. Residues 435-446 (PWEDPVEKQLQH) show a composition bias toward basic and acidic residues. Residues 453–464 (QSAPQVAVNGQQ) show a composition bias toward polar residues. The 60-residue stretch at 477-536 (KARKWVLCNYDFQARNGSELSVKHRDVLEVLDDRRKWWKVRDHQGQEGYVPYNILTPHPG) folds into the SH3 domain. The span at 553-563 (TPPPPPAPAPA) shows a compositional bias: pro residues. The stretch at 682–713 (VQRALLEDREKVSELEAVMEKQKKKVEGETKT) forms a coiled coil.

This sequence belongs to the EPS8 family. In terms of assembly, interacts with ABI1. Part of a complex that contains SOS1, ABI1 and EPS8L2. Associates with F-actin. As to expression, detected in placenta, skin, mammary gland, bone marrow and stomach.

The protein resides in the cytoplasm. Stimulates guanine exchange activity of SOS1. May play a role in membrane ruffling and remodeling of the actin cytoskeleton. The sequence is that of Epidermal growth factor receptor kinase substrate 8-like protein 1 (Eps8l1) from Mus musculus (Mouse).